The primary structure comprises 597 residues: Gamma-terpinene synthase, chloroplastic (597 aa).

Residues methionine 1–serine 47 constitute a chloroplast transit peptide. Mn(2+) is bound by residues aspartate 350 and aspartate 354. The DDXXD motif signature appears at aspartate 350–aspartate 354. Homodimerization regions lie at residues tyrosine 356 to leucine 362 and glutamate 428 to leucine 464. Mn(2+) contacts are provided by aspartate 494 and glutamate 502.

Belongs to the terpene synthase family. Homodimer. The cofactor is Mn(2+). Mg(2+) serves as cofactor.

Its subcellular location is the plastid. The protein localises to the chloroplast. The catalysed reaction is (2E)-geranyl diphosphate = gamma-terpinene + diphosphate. The protein operates within secondary metabolite biosynthesis; terpenoid biosynthesis. Its function is as follows. Involved in the biosynthesis of phenolic monoterpenes natural products thymol and carvacrol which have a broad range of biological activities acting as antimicrobial compounds, insecticides, antioxidants and pharmaceutical agents. Monoterpene synthase which catalyzes the conversion of geranyl diphosphate (GPP) to gamma-terpinene and minor amounts of other monoterpenes (e.g. alpha-thujene, alpha-terpinene, myrcene, sabinene, (+)-R-limonene, alpha-pinene and alpha-phellandrene). The polypeptide is Gamma-terpinene synthase, chloroplastic (Thymus caespititius (Cretan thyme)).